A 357-amino-acid polypeptide reads, in one-letter code: Anthranilate phosphoribosyltransferase (357 aa).

5-phospho-alpha-D-ribose 1-diphosphate-binding positions include glycine 91, 94 to 95 (GD), threonine 99, 101 to 104 (NIST), 119 to 127 (KHGNRSVSS), and serine 131. Position 91 (glycine 91) interacts with anthranilate. Serine 103 is a Mg(2+) binding site. Asparagine 122 contacts anthranilate. Arginine 177 lines the anthranilate pocket. The Mg(2+) site is built by aspartate 235 and glutamate 236.

It belongs to the anthranilate phosphoribosyltransferase family. In terms of assembly, homodimer. Mg(2+) serves as cofactor.

It carries out the reaction N-(5-phospho-beta-D-ribosyl)anthranilate + diphosphate = 5-phospho-alpha-D-ribose 1-diphosphate + anthranilate. It participates in amino-acid biosynthesis; L-tryptophan biosynthesis; L-tryptophan from chorismate: step 2/5. Functionally, catalyzes the transfer of the phosphoribosyl group of 5-phosphorylribose-1-pyrophosphate (PRPP) to anthranilate to yield N-(5'-phosphoribosyl)-anthranilate (PRA). The protein is Anthranilate phosphoribosyltransferase of Shewanella baltica (strain OS195).